The chain runs to 65 residues: Large ribosomal subunit protein bL35 (65 aa).

Belongs to the bacterial ribosomal protein bL35 family.

The chain is Large ribosomal subunit protein bL35 from Synechococcus sp. (strain CC9605).